A 304-amino-acid chain; its full sequence is Probable aspartoacylase (304 aa).

Zn(2+)-binding residues include His-13 and Glu-16. Substrate contacts are provided by residues Arg-55 and 62-63 (NR). His-104 lines the Zn(2+) pocket. Residues Glu-162 and Tyr-272 each coordinate substrate.

It belongs to the AspA/AstE family. Aspartoacylase subfamily. It depends on Zn(2+) as a cofactor.

It carries out the reaction an N-acyl-L-aspartate + H2O = a carboxylate + L-aspartate. This is Probable aspartoacylase from Synechococcus sp. (strain CC9605).